Here is a 418-residue protein sequence, read N- to C-terminus: Tyrosine--tRNA ligase (418 aa).

Tyr34 lines the L-tyrosine pocket. Positions 39–48 match the 'HIGH' region motif; that stretch reads PTGDSMHIGH. L-tyrosine-binding residues include Tyr166 and Gln170. A 'KMSKS' region motif is present at residues 228-232; it reads KFGKT. Position 231 (Lys231) interacts with ATP. Residues 350 to 417 form the S4 RNA-binding domain; that stretch reads TNIVELLTET…KKNYFLAKVK (68 aa).

This sequence belongs to the class-I aminoacyl-tRNA synthetase family. TyrS type 1 subfamily. As to quaternary structure, homodimer.

The protein resides in the cytoplasm. It carries out the reaction tRNA(Tyr) + L-tyrosine + ATP = L-tyrosyl-tRNA(Tyr) + AMP + diphosphate + H(+). Catalyzes the attachment of tyrosine to tRNA(Tyr) in a two-step reaction: tyrosine is first activated by ATP to form Tyr-AMP and then transferred to the acceptor end of tRNA(Tyr). This chain is Tyrosine--tRNA ligase, found in Levilactobacillus brevis (Lactobacillus brevis).